Here is a 95-residue protein sequence, read N- to C-terminus: Aspartyl/glutamyl-tRNA(Asn/Gln) amidotransferase subunit C (95 aa).

The protein belongs to the GatC family. Heterotrimer of A, B and C subunits.

The enzyme catalyses L-glutamyl-tRNA(Gln) + L-glutamine + ATP + H2O = L-glutaminyl-tRNA(Gln) + L-glutamate + ADP + phosphate + H(+). The catalysed reaction is L-aspartyl-tRNA(Asn) + L-glutamine + ATP + H2O = L-asparaginyl-tRNA(Asn) + L-glutamate + ADP + phosphate + 2 H(+). Allows the formation of correctly charged Asn-tRNA(Asn) or Gln-tRNA(Gln) through the transamidation of misacylated Asp-tRNA(Asn) or Glu-tRNA(Gln) in organisms which lack either or both of asparaginyl-tRNA or glutaminyl-tRNA synthetases. The reaction takes place in the presence of glutamine and ATP through an activated phospho-Asp-tRNA(Asn) or phospho-Glu-tRNA(Gln). The sequence is that of Aspartyl/glutamyl-tRNA(Asn/Gln) amidotransferase subunit C from Methylobacterium nodulans (strain LMG 21967 / CNCM I-2342 / ORS 2060).